The primary structure comprises 61 residues: Large ribosomal subunit protein uL30 (61 aa).

Belongs to the universal ribosomal protein uL30 family. As to quaternary structure, part of the 50S ribosomal subunit.

The sequence is that of Large ribosomal subunit protein uL30 from Frankia alni (strain DSM 45986 / CECT 9034 / ACN14a).